A 521-amino-acid chain; its full sequence is Ribonuclease Y (521 aa).

The helical transmembrane segment at 1-21 threads the bilayer; the sequence is MFFIEHPFVYLGLDLIVGCLI. The KH domain occupies 211-271; the sequence is TVSMVPLPSD…VRREVARLAL (61 aa). Residues 337-430 form the HD domain; it reads VLQHSLEVAF…VQAADALSGA (94 aa).

This sequence belongs to the RNase Y family.

The protein resides in the cell membrane. Its function is as follows. Endoribonuclease that initiates mRNA decay. The sequence is that of Ribonuclease Y from Desulfotalea psychrophila (strain LSv54 / DSM 12343).